Here is a 221-residue protein sequence, read N- to C-terminus: GTP cyclohydrolase 1 (221 aa).

Residues Cys109, His112, and Cys180 each contribute to the Zn(2+) site.

It belongs to the GTP cyclohydrolase I family. Toroid-shaped homodecamer, composed of two pentamers of five dimers.

The catalysed reaction is GTP + H2O = 7,8-dihydroneopterin 3'-triphosphate + formate + H(+). Its pathway is cofactor biosynthesis; 7,8-dihydroneopterin triphosphate biosynthesis; 7,8-dihydroneopterin triphosphate from GTP: step 1/1. This Sodalis glossinidius (strain morsitans) protein is GTP cyclohydrolase 1.